Consider the following 131-residue polypeptide: uncharacterized protein (131 aa).

One can recognise a Response regulatory domain in the interval 8–124; it reads DILVVDDDPD…ELIRLVQQYC (117 aa). A 4-aspartylphosphate modification is found at aspartate 57.

This is an uncharacterized protein from Leptolyngbya boryana (Plectonema boryanum).